Reading from the N-terminus, the 577-residue chain is Arginine--tRNA ligase (577 aa).

Residues 122-132 (PNVAKEMHVGH) carry the 'HIGH' region motif.

This sequence belongs to the class-I aminoacyl-tRNA synthetase family. As to quaternary structure, monomer.

It is found in the cytoplasm. The catalysed reaction is tRNA(Arg) + L-arginine + ATP = L-arginyl-tRNA(Arg) + AMP + diphosphate. This chain is Arginine--tRNA ligase, found in Shigella flexneri serotype 5b (strain 8401).